The chain runs to 204 residues: NADH-ubiquinone oxidoreductase subunit 9 (204 aa).

This sequence belongs to the complex I 30 kDa subunit family. In terms of assembly, complex I is composed of about 30 different subunits.

The protein resides in the mitochondrion inner membrane. It carries out the reaction a ubiquinone + NADH + 5 H(+)(in) = a ubiquinol + NAD(+) + 4 H(+)(out). Functionally, core subunit of the mitochondrial membrane respiratory chain NADH dehydrogenase (Complex I) that is believed to belong to the minimal assembly required for catalysis. Complex I functions in the transfer of electrons from NADH to the respiratory chain. The immediate electron acceptor for the enzyme is believed to be ubiquinone. This chain is NADH-ubiquinone oxidoreductase subunit 9 (NAD9), found in Reclinomonas americana.